Consider the following 251-residue polypeptide: Zinc import ATP-binding protein ZnuC (251 aa).

One can recognise an ABC transporter domain in the interval 5-220 (VSLENVSVSF…PEFISMFGPR (216 aa)). Position 37-44 (37-44 (GPNGAGKS)) interacts with ATP.

Belongs to the ABC transporter superfamily. Zinc importer (TC 3.A.1.15.5) family. As to quaternary structure, the complex is composed of two ATP-binding proteins (ZnuC), two transmembrane proteins (ZnuB) and a solute-binding protein (ZnuA).

It localises to the cell inner membrane. It catalyses the reaction Zn(2+)(out) + ATP(in) + H2O(in) = Zn(2+)(in) + ADP(in) + phosphate(in) + H(+)(in). Functionally, part of the ABC transporter complex ZnuABC involved in zinc import. Responsible for energy coupling to the transport system. The sequence is that of Zinc import ATP-binding protein ZnuC from Escherichia coli O157:H7.